The chain runs to 371 residues: Protein NDRG2 (371 aa).

Positions 1 to 22 (MAELQEVQITEEKPLLPGQTPE) are disordered. At Ala2 the chain carries N-acetylalanine. The residue at position 20 (Thr20) is a Phosphothreonine. A phosphoserine mark is found at Ser326 and Ser328. The residue at position 330 (Thr330) is a Phosphothreonine; by SGK1. Ser332 carries the phosphoserine; by PKC/PRKCQ or SGK1 modification. Position 334 is a phosphothreonine (Thr334). The segment at 334-371 (TSAASIDGSRSRSRTLSQSSESGTLPSGPPGHTMEVSC) is disordered. 3 positions are modified to phosphoserine: Ser335, Ser338, and Ser344. Position 348 is a phosphothreonine; by PKB/AKT1 or SGK1 (Thr348). 4 positions are modified to phosphoserine: Ser350, Ser352, Ser353, and Ser355. Thr357 carries the post-translational modification Phosphothreonine. At Ser370 the chain carries Phosphoserine.

Belongs to the NDRG family. In terms of assembly, interacts with CTNNB1. As to expression, expressed at highest levels in brain, heart and liver, and at lower levels in kidney, colon, skeletal muscle, adrenal gland, ovary and uterus (at protein level).

It localises to the cytoplasm. It is found in the perinuclear region. Its subcellular location is the cell projection. The protein localises to the growth cone. Its function is as follows. Contributes to the regulation of the Wnt signaling pathway. Down-regulates CTNNB1-mediated transcriptional activation of target genes, such as CCND1, and may thereby act as tumor suppressor. May be involved in dendritic cell and neuron differentiation. This is Protein NDRG2 (Ndrg2) from Mus musculus (Mouse).